Here is a 464-residue protein sequence, read N- to C-terminus: ATP synthase subunit beta (464 aa).

Glycine 152–threonine 159 is a binding site for ATP.

This sequence belongs to the ATPase alpha/beta chains family. In terms of assembly, F-type ATPases have 2 components, CF(1) - the catalytic core - and CF(0) - the membrane proton channel. CF(1) has five subunits: alpha(3), beta(3), gamma(1), delta(1), epsilon(1). CF(0) has three main subunits: a(1), b(2) and c(9-12). The alpha and beta chains form an alternating ring which encloses part of the gamma chain. CF(1) is attached to CF(0) by a central stalk formed by the gamma and epsilon chains, while a peripheral stalk is formed by the delta and b chains.

Its subcellular location is the cell inner membrane. It carries out the reaction ATP + H2O + 4 H(+)(in) = ADP + phosphate + 5 H(+)(out). Functionally, produces ATP from ADP in the presence of a proton gradient across the membrane. The catalytic sites are hosted primarily by the beta subunits. The chain is ATP synthase subunit beta from Aliarcobacter butzleri (strain RM4018) (Arcobacter butzleri).